The primary structure comprises 428 residues: Adenylosuccinate synthetase (428 aa).

Residues 12-18 (GDEGKGK) and 40-42 (GHT) each bind GTP. Catalysis depends on Asp13, which acts as the Proton acceptor. 2 residues coordinate Mg(2+): Asp13 and Gly40. IMP contacts are provided by residues 13–16 (DEGK), 38–41 (NAGH), Thr128, Arg142, Gln223, Thr238, and Arg302. The active-site Proton donor is the His41. Position 298–304 (298–304 (TTTGRPR)) interacts with substrate. GTP is bound by residues Arg304, 330–332 (SID), and 412–414 (SVG).

This sequence belongs to the adenylosuccinate synthetase family. As to quaternary structure, homodimer. It depends on Mg(2+) as a cofactor.

The protein localises to the cytoplasm. It carries out the reaction IMP + L-aspartate + GTP = N(6)-(1,2-dicarboxyethyl)-AMP + GDP + phosphate + 2 H(+). The protein operates within purine metabolism; AMP biosynthesis via de novo pathway; AMP from IMP: step 1/2. In terms of biological role, plays an important role in the de novo pathway of purine nucleotide biosynthesis. Catalyzes the first committed step in the biosynthesis of AMP from IMP. The sequence is that of Adenylosuccinate synthetase from Streptococcus pneumoniae serotype 2 (strain D39 / NCTC 7466).